Here is a 254-residue protein sequence, read N- to C-terminus: Diphthine synthase (254 aa).

S-adenosyl-L-methionine-binding positions include leucine 11, aspartate 86, isoleucine 89, 114–115 (SV), leucine 166, leucine 207, and histidine 232.

The protein belongs to the diphthine synthase family. Homodimer.

It catalyses the reaction 2-[(3S)-amino-3-carboxypropyl]-L-histidyl-[translation elongation factor 2] + 3 S-adenosyl-L-methionine = diphthine-[translation elongation factor 2] + 3 S-adenosyl-L-homocysteine + 3 H(+). The protein operates within protein modification; peptidyl-diphthamide biosynthesis. Functionally, S-adenosyl-L-methionine-dependent methyltransferase that catalyzes the trimethylation of the amino group of the modified target histidine residue in translation elongation factor 2 (EF-2), to form an intermediate called diphthine. The three successive methylation reactions represent the second step of diphthamide biosynthesis. The chain is Diphthine synthase from Sulfurisphaera tokodaii (strain DSM 16993 / JCM 10545 / NBRC 100140 / 7) (Sulfolobus tokodaii).